We begin with the raw amino-acid sequence, 183 residues long: MLEKNLDKAIEKVLVSEEEIIEKSKELGEILTKEYEGKNPLVLGILRGSVPFLAELIKHIDCHLETDFMTVSSYHGGTKSSGEVKLILDVDTAVKGRDILIVEDIIDTGRTLKYLKELLEHRGANVKIVTLLDKPEGRIVEIKPDYSGFTIPNEFVVGFGLDYEENYRNLPYVGVLKPEVYNK.

Residues Arg47 and Gly48 each contribute to the diphosphate site. 2 residues coordinate Mg(2+): Glu103 and Asp104. The active-site Proton acceptor is the Asp107. GMP-binding positions include Lys134, 155 to 156 (FV), and Asp162. Arg168 lines the diphosphate pocket.

It belongs to the purine/pyrimidine phosphoribosyltransferase family. Requires Mg(2+) as cofactor.

Its subcellular location is the cytoplasm. The enzyme catalyses IMP + diphosphate = hypoxanthine + 5-phospho-alpha-D-ribose 1-diphosphate. It carries out the reaction GMP + diphosphate = guanine + 5-phospho-alpha-D-ribose 1-diphosphate. It functions in the pathway purine metabolism; IMP biosynthesis via salvage pathway; IMP from hypoxanthine: step 1/1. It participates in purine metabolism; GMP biosynthesis via salvage pathway; GMP from guanine: step 1/1. Its function is as follows. Purine salvage pathway enzyme that catalyzes the transfer of the ribosyl-5-phosphate group from 5-phospho-alpha-D-ribose 1-diphosphate (PRPP) to the N9 position of the 6-oxopurines hypoxanthine and guanine to form the corresponding ribonucleotides IMP (inosine 5'-monophosphate) and GMP (guanosine 5'-monophosphate), with the release of PPi. In Lactococcus lactis subsp. lactis (strain IL1403) (Streptococcus lactis), this protein is Hypoxanthine-guanine phosphoribosyltransferase (hpt).